Consider the following 177-residue polypeptide: Large ribosomal subunit protein uL6 (177 aa).

The protein belongs to the universal ribosomal protein uL6 family. As to quaternary structure, part of the 50S ribosomal subunit.

Functionally, this protein binds to the 23S rRNA, and is important in its secondary structure. It is located near the subunit interface in the base of the L7/L12 stalk, and near the tRNA binding site of the peptidyltransferase center. The sequence is that of Large ribosomal subunit protein uL6 from Colwellia psychrerythraea (strain 34H / ATCC BAA-681) (Vibrio psychroerythus).